The primary structure comprises 171 residues: Flavodoxin (171 aa).

Positions 4 to 165 (IGIFFGSDTG…RIKQWVKQII (162 aa)) constitute a Flavodoxin-like domain.

The protein belongs to the flavodoxin family. The cofactor is FMN.

Its function is as follows. Low-potential electron donor to a number of redox enzymes. The sequence is that of Flavodoxin (fldA) from Buchnera aphidicola subsp. Acyrthosiphon pisum (strain APS) (Acyrthosiphon pisum symbiotic bacterium).